The following is a 447-amino-acid chain: UPF0210 protein OEOE_0945 (447 aa).

The protein belongs to the UPF0210 family. In terms of assembly, homodimer.

The chain is UPF0210 protein OEOE_0945 from Oenococcus oeni (strain ATCC BAA-331 / PSU-1).